We begin with the raw amino-acid sequence, 404 residues long: tRNA-specific 2-thiouridylase MnmA (404 aa).

Residues 42–49 (GLSGGVDS) and L68 contribute to the ATP site. C129 functions as the Nucleophile in the catalytic mechanism. C129 and C239 are disulfide-bonded. An ATP-binding site is contributed by G154. Residues 189–191 (KDQ) are interaction with tRNA. C239 acts as the Cysteine persulfide intermediate in catalysis. The tract at residues 344-345 (RY) is interaction with tRNA.

This sequence belongs to the MnmA/TRMU family.

The protein localises to the cytoplasm. It catalyses the reaction S-sulfanyl-L-cysteinyl-[protein] + uridine(34) in tRNA + AH2 + ATP = 2-thiouridine(34) in tRNA + L-cysteinyl-[protein] + A + AMP + diphosphate + H(+). In terms of biological role, catalyzes the 2-thiolation of uridine at the wobble position (U34) of tRNA, leading to the formation of s(2)U34. The protein is tRNA-specific 2-thiouridylase MnmA of Prochlorococcus marinus (strain NATL1A).